The following is an 830-amino-acid chain: G-type lectin S-receptor-like serine/threonine-protein kinase SD1-13 (830 aa).

Residues 1-21 (MGCLLILLLTLICFSLRLCLA) form the signal peptide. The 124-residue stretch at 22–145 (TDVITFSSEF…TNTGDEILWE (124 aa)) folds into the Bulb-type lectin domain. Topologically, residues 22–434 (TDVITFSSEF…SEFKKRTNRS (413 aa)) are extracellular. Residues Asn40, Asn53, and Asn82 are each glycosylated (N-linked (GlcNAc...) asparagine). The EGF-like; atypical domain maps to 283–321 (PSTKCDTYATCGQFASCRFNPGSTPPCMCIRGFKPQSYA). 2 disulfide bridges follow: Cys287–Cys299 and Cys293–Cys309. Residues Asn327, Asn384, and Asn432 are each glycosylated (N-linked (GlcNAc...) asparagine). Positions 340-423 (CESRDNNDGS…TGVVFYIRLA (84 aa)) constitute a PAN domain. 2 disulfides stabilise this stretch: Cys377/Cys398 and Cys381/Cys387. The chain crosses the membrane as a helical span at residues 435–455 (IVITVTLLVGAFLFAGTVVLA). Over 456 to 830 (LWKIAKHREK…NVSLTKITGR (375 aa)) the chain is Cytoplasmic. The Protein kinase domain maps to 512 to 798 (FSITNKLGQG…NLPEPKQPAF (287 aa)). Residues 518–526 (LGQGGFGAV) and Lys540 contribute to the ATP site. A Phosphothreonine modification is found at Thr545. Residues Ser546 and Ser561 each carry the phosphoserine modification. The interval 601–618 (VKQRLLDWKTRFNIIDGI) is caM-binding. The active-site Proton acceptor is the Asp637. A phosphoserine mark is found at Ser641, Ser654, and Ser670. The residue at position 671 (Thr671) is a Phosphothreonine. A phosphoserine mark is found at Ser714, Ser715, Ser726, Ser805, Ser809, Ser810, Ser813, Ser818, and Ser823. Residues 789-830 (NLPEPKQPAFIPRRGTSEVESSGQSDPRASINNVSLTKITGR) form a disordered region. The span at 806–830 (EVESSGQSDPRASINNVSLTKITGR) shows a compositional bias: polar residues. A phosphothreonine mark is found at Thr825 and Thr828.

This sequence belongs to the protein kinase superfamily. Ser/Thr protein kinase family. As to quaternary structure, interacts with PUB9, PUB13 and PUB14. Binds to calmodulin (CaM) in a Ca(2+)-dependent manner. Autophosphorylated. Mostly expressed in rosette leaves, and, to a lower extent, in cauline leaves and stems.

The protein localises to the cell membrane. It carries out the reaction L-seryl-[protein] + ATP = O-phospho-L-seryl-[protein] + ADP + H(+). It catalyses the reaction L-threonyl-[protein] + ATP = O-phospho-L-threonyl-[protein] + ADP + H(+). Its function is as follows. Receptor-like serine/threonine-protein kinase that represses the disease resistance signaling pathway triggered in response to bacterial pathogen such as Pseudomonas syringae pv. tomato. The chain is G-type lectin S-receptor-like serine/threonine-protein kinase SD1-13 (SD113) from Arabidopsis thaliana (Mouse-ear cress).